We begin with the raw amino-acid sequence, 451 residues long: Opioid growth factor receptor-like protein 1 (451 aa).

Disordered regions lie at residues 1–89 and 308–451; these read MGNL…TAKP and ENFI…VLVQ. Low complexity predominate over residues 43-66; sequence PGQESEQPAQPPEQAGGRPGASPA. The segment covering 322-341 has biased composition (polar residues); the sequence is GSKAQKMSSPLASSHNSQTS. 2 stretches are compositionally biased toward basic and acidic residues: residues 362-381 and 389-399; these read TAEDKKVAPKEPVEETDRPS and AKPRNTEKDSN. The span at 431 to 443 shows a compositional bias: low complexity; that stretch reads NDNQDNENPGNTN.

Belongs to the opioid growth factor receptor family. In terms of tissue distribution, ubiquitous.

The protein is Opioid growth factor receptor-like protein 1 (OGFRL1) of Homo sapiens (Human).